Consider the following 365-residue polypeptide: Class I histocompatibility antigen, Gogo-A*0401 alpha chain (365 aa).

The first 24 residues, 1–24 (MAVMAPRTLVLLLSGALALTQTWA), serve as a signal peptide directing secretion. The tract at residues 25–114 (GSHSMRYFYT…LRGYYNQSED (90 aa)) is alpha-1. The Extracellular segment spans residues 25 to 308 (GSHSMRYFYT…EPSSQPTIPI (284 aa)). A glycan (N-linked (GlcNAc...) asparagine) is linked at Asn110. The alpha-2 stretch occupies residues 115–206 (GSHTIQRMYG…ENGKETLQLT (92 aa)). Intrachain disulfides connect Cys125–Cys188 and Cys227–Cys283. The segment at 207–298 (DAPKTHMTHH…GLPKPLTLRW (92 aa)) is alpha-3. The region spanning 209–295 (PKTHMTHHPV…QHEGLPKPLT (87 aa)) is the Ig-like C1-type domain. The interval 299-308 (EPSSQPTIPI) is connecting peptide. A helical membrane pass occupies residues 309–332 (VGIIAGLVLFGAVIAGAVVAAVRW). Residues 333–365 (RRKSSDRKGGSYSQAASSDSAQGSDVSLTACKV) are Cytoplasmic-facing. The disordered stretch occupies residues 338–365 (DRKGGSYSQAASSDSAQGSDVSLTACKV). Positions 342–359 (GSYSQAASSDSAQGSDVS) are enriched in low complexity. A Phosphoserine modification is found at Ser343. The residue at position 344 (Tyr344) is a Phosphotyrosine. A phosphoserine mark is found at Ser345, Ser349, Ser350, Ser352, Ser356, and Ser359.

Belongs to the MHC class I family. As to quaternary structure, heterodimer of an alpha chain and a beta chain (beta-2-microglobulin).

The protein resides in the membrane. Involved in the presentation of foreign antigens to the immune system. This chain is Class I histocompatibility antigen, Gogo-A*0401 alpha chain, found in Gorilla gorilla gorilla (Western lowland gorilla).